Reading from the N-terminus, the 177-residue chain is MARADKATAVANIAEQFKAATAALITEYRGLTVANLAELRRSLTGSASYAVAKNTLIKRAASEVGIEGLDELFAGPTAIAFVTGEPVDAAKAIKTFAKEHKALVIKGGYMDGHPMTVAEVERIADLESREVLLAKLAGAMKGTFAKAIGLFNAPTSQMARLTAALQEKKAFEPASAE.

This sequence belongs to the universal ribosomal protein uL10 family. As to quaternary structure, part of the ribosomal stalk of the 50S ribosomal subunit. The N-terminus interacts with L11 and the large rRNA to form the base of the stalk. The C-terminus forms an elongated spine to which L12 dimers bind in a sequential fashion forming a multimeric L10(L12)X complex.

In terms of biological role, forms part of the ribosomal stalk, playing a central role in the interaction of the ribosome with GTP-bound translation factors. The chain is Large ribosomal subunit protein uL10 from Mycobacterium leprae (strain Br4923).